We begin with the raw amino-acid sequence, 1234 residues long: ATP-dependent helicase/nuclease subunit A (1234 aa).

Residues 9–482 (STWTDDQWEA…IDLNKNFRSR (474 aa)) form the UvrD-like helicase ATP-binding domain. Residue 30–37 (AAAGSGKT) coordinates ATP. The UvrD-like helicase C-terminal domain maps to 509 to 800 (QAELKLGASY…RMMTIHSSKG (292 aa)).

This sequence belongs to the helicase family. AddA subfamily. In terms of assembly, heterodimer of AddA and AddB/RexB. It depends on Mg(2+) as a cofactor.

It catalyses the reaction Couples ATP hydrolysis with the unwinding of duplex DNA by translocating in the 3'-5' direction.. The enzyme catalyses ATP + H2O = ADP + phosphate + H(+). In terms of biological role, the heterodimer acts as both an ATP-dependent DNA helicase and an ATP-dependent, dual-direction single-stranded exonuclease. Recognizes the chi site generating a DNA molecule suitable for the initiation of homologous recombination. The AddA nuclease domain is required for chi fragment generation; this subunit has the helicase and 3' -&gt; 5' nuclease activities. The chain is ATP-dependent helicase/nuclease subunit A from Bacillus pumilus (strain SAFR-032).